Consider the following 1216-residue polypeptide: Apical endosomal glycoprotein (1216 aa).

A signal peptide spans 1-22 (MPLSSHLLPALVLFLAGSSGWA). The Extracellular portion of the chain corresponds to 23-1151 (WVPNHCRSPG…SPGNTAAPGS (1129 aa)). Positions 26–53 (NHCRSPGQAVCNFVCDCRDCSDEAQCGY) constitute an LDL-receptor class A 1; truncated domain. In terms of domain architecture, MAM 1 spans 64–222 (FACDFEQDPC…DDLEFWDCGL (159 aa)). An N-linked (GlcNAc...) asparagine glycan is attached at Asn-203. An LDL-receptor class A 2 domain is found at 228–266 (NCPPGHHHCQNKVCVEPQQLCDGEDNCGDLSDENPLTCG). 3 disulfides stabilise this stretch: Cys-229–Cys-241, Cys-236–Cys-254, and Cys-248–Cys-265. Residues 269–425 (IATDFETGLG…DLILSDHCRP (157 aa)) enclose the MAM 2 domain. Positions 280–307 (WNRSEGWSRNHRAGGPERPSWPRRDHSR) are disordered. 2 N-linked (GlcNAc...) asparagine glycosylation sites follow: Asn-281 and Asn-339. Positions 429-455 (VSTLQPLPPGPRAPAPQPLPPSSRLQD) are disordered. Residues 434–449 (PLPPGPRAPAPQPLPP) show a composition bias toward pro residues. The LDL-receptor class A 3 domain maps to 456-491 (SCKQGHLACGDLCVPPEQLCDFEEQCAGGEDEQACG). Intrachain disulfides connect Cys-457-Cys-468, Cys-464-Cys-481, and Cys-475-Cys-490. MAM domains are found at residues 491-644 (GTTD…DCSP), 654-809 (VSCN…PCWA), 811-969 (NYCS…PCPQ), and 971-1138 (GSCD…HCQQ). Residues Asn-583 and Asn-636 are each glycosylated (N-linked (GlcNAc...) asparagine). Asn-835 carries N-linked (GlcNAc...) asparagine glycosylation. A helical transmembrane segment spans residues 1152–1172 (VPAVVGSALLLLMLLVLLGLG). Topologically, residues 1173–1216 (GRRWLQKKGSCPFQSNTEATAPGFDNILFNADGVTLPASVTSDP) are cytoplasmic.

It is found in the membrane. Its function is as follows. Probably involved in the sorting and selective transport of receptors and ligands across polarized epithelia. This Homo sapiens (Human) protein is Apical endosomal glycoprotein.